Here is a 201-residue protein sequence, read N- to C-terminus: Peptidyl-prolyl cis-trans isomerase CYP19-4 (201 aa).

A signal peptide spans 1-23 (MAKASFILLGTLFLFGAIASIQA). In terms of domain architecture, PPIase cyclophilin-type spans 35-198 (YFDVEIDGKS…SKVVIADSGE (164 aa)).

This sequence belongs to the cyclophilin-type PPIase family. Interacts with EMB30/GNOM. Ubiquitous, mostly in aerial organs (at protein level).

Its subcellular location is the cytoplasm. It localises to the membrane. It is found in the endoplasmic reticulum. The protein resides in the secreted. The enzyme catalyses [protein]-peptidylproline (omega=180) = [protein]-peptidylproline (omega=0). Its activity is regulated as follows. Binds cyclosporin A (CsA). CsA mediates some of its effects via an inhibitory action on PPIase. PPIases accelerate the folding of proteins. It catalyzes the cis-trans isomerization of proline imidic peptide bonds in oligopeptides. May be involved during embryogenesis and organ development by regulating the folding of EMB30/GNOM, and thus, by modulating its activity. In Arabidopsis thaliana (Mouse-ear cress), this protein is Peptidyl-prolyl cis-trans isomerase CYP19-4 (CYP19-4).